Consider the following 180-residue polypeptide: RNA polymerase sigma-E factor (180 aa).

The short motif at 36-49 (DLLQTALARTYGRW) is the Polymerase core binding element. Residues 130-149 (TEETAAALGMSAGTVKSTLH) constitute a DNA-binding region (H-T-H motif).

The protein belongs to the sigma-70 factor family. ECF subfamily.

It is found in the cytoplasm. Sigma factors are initiation factors that promote the attachment of RNA polymerase to specific initiation sites and are then released. This sigma factor is required for the synthesis of the antibiotic actinomycin. This chain is RNA polymerase sigma-E factor (sigE), found in Streptomyces antibioticus.